The following is a 77-amino-acid chain: Sec-independent protein translocase protein TatA (77 aa).

Residues 1–21 (MGSLSIWHWIVVIAVVLLLFG) traverse the membrane as a helical segment. The segment covering 43-60 (MQDDDKAPEKTEPVKSID) has biased composition (basic and acidic residues). The segment at 43–77 (MQDDDKAPEKTEPVKSIDHGATPSATRTDVGSKAV) is disordered.

This sequence belongs to the TatA/E family. The Tat system comprises two distinct complexes: a TatABC complex, containing multiple copies of TatA, TatB and TatC subunits, and a separate TatA complex, containing only TatA subunits. Substrates initially bind to the TatABC complex, which probably triggers association of the separate TatA complex to form the active translocon.

The protein localises to the cell inner membrane. Functionally, part of the twin-arginine translocation (Tat) system that transports large folded proteins containing a characteristic twin-arginine motif in their signal peptide across membranes. TatA could form the protein-conducting channel of the Tat system. This Bradyrhizobium sp. (strain BTAi1 / ATCC BAA-1182) protein is Sec-independent protein translocase protein TatA.